Here is a 310-residue protein sequence, read N- to C-terminus: Putative S-adenosyl-L-methionine-dependent methyltransferase MUL_2766 (310 aa).

Residues Asp131 and 160-161 (DL) each bind S-adenosyl-L-methionine.

Belongs to the UPF0677 family.

In terms of biological role, exhibits S-adenosyl-L-methionine-dependent methyltransferase activity. This Mycobacterium ulcerans (strain Agy99) protein is Putative S-adenosyl-L-methionine-dependent methyltransferase MUL_2766.